A 439-amino-acid chain; its full sequence is Apolipoprotein N-acyltransferase (439 aa).

6 helical membrane-spanning segments follow: residues 13-33 (LLAGILFYLSFSKLNLYFLVF), 47-67 (LFSFGFSAFFLSLLWIRIPLI), 75-95 (FIAYPALVLLVLFLSLYQFGL), 97-117 (YLLWRVFKFSFFAFPFLYTLV), 149-169 (NAGTVFLGSFVVLLISLFPLF), and 175-195 (IFSLAIITPLLIYGFIKETSY). A CN hydrolase domain is found at 207–439 (IQPFVPQDVK…GSRGILLFSF (233 aa)). Catalysis depends on Glu-248, which acts as the Proton acceptor. Lys-305 is an active-site residue. Cys-355 (nucleophile) is an active-site residue.

The protein belongs to the CN hydrolase family. Apolipoprotein N-acyltransferase subfamily.

The protein localises to the cell inner membrane. The catalysed reaction is N-terminal S-1,2-diacyl-sn-glyceryl-L-cysteinyl-[lipoprotein] + a glycerophospholipid = N-acyl-S-1,2-diacyl-sn-glyceryl-L-cysteinyl-[lipoprotein] + a 2-acyl-sn-glycero-3-phospholipid + H(+). It participates in protein modification; lipoprotein biosynthesis (N-acyl transfer). Its function is as follows. Catalyzes the phospholipid dependent N-acylation of the N-terminal cysteine of apolipoprotein, the last step in lipoprotein maturation. The chain is Apolipoprotein N-acyltransferase from Aquifex aeolicus (strain VF5).